Consider the following 497-residue polypeptide: Lysine--tRNA ligase (497 aa).

Mg(2+)-binding residues include Glu-409 and Glu-416.

This sequence belongs to the class-II aminoacyl-tRNA synthetase family. As to quaternary structure, homodimer. Mg(2+) is required as a cofactor.

It localises to the cytoplasm. The catalysed reaction is tRNA(Lys) + L-lysine + ATP = L-lysyl-tRNA(Lys) + AMP + diphosphate. In Streptococcus pyogenes serotype M49 (strain NZ131), this protein is Lysine--tRNA ligase.